We begin with the raw amino-acid sequence, 209 residues long: Transcription antitermination protein NusB (209 aa).

The protein belongs to the NusB family.

Functionally, involved in transcription antitermination. Required for transcription of ribosomal RNA (rRNA) genes. Binds specifically to the boxA antiterminator sequence of the ribosomal RNA (rrn) operons. The protein is Transcription antitermination protein NusB of Crocosphaera subtropica (strain ATCC 51142 / BH68) (Cyanothece sp. (strain ATCC 51142)).